A 415-amino-acid polypeptide reads, in one-letter code: Mitogen-activated protein kinase MPS1 (415 aa).

One can recognise a Protein kinase domain in the interval 23–314 (YTVTKELGQG…VEQALEHPYL (292 aa)). ATP-binding positions include 29–37 (LGQGAYGIV) and K52. The tract at residues 363-394 (GAGGHGAPHAPQVPIPAGAGQGQWKAEDPRPQ) is disordered.

Belongs to the protein kinase superfamily. Ser/Thr protein kinase family. MAP kinase subfamily. Interacts with transcription factor MIG1. Interacts with transcription factor SWI6. It depends on Mg(2+) as a cofactor.

It catalyses the reaction L-seryl-[protein] + ATP = O-phospho-L-seryl-[protein] + ADP + H(+). It carries out the reaction L-threonyl-[protein] + ATP = O-phospho-L-threonyl-[protein] + ADP + H(+). In terms of biological role, mitogen-activated protein kinase; part of the MCK1-MKK2-MPS1 MAP kinase (MAPK) signal transduction cascade that is essential for cell wall integrity and plant infection, but not for plant defense responses. Beside its role in pathogenesis, the MPS1 cascade is active in conidiation and cellular stress responses. Targets downstream of the MPS1-MAPK pathway include transcription factors MIG1 and SWI6, as well as GSK1 and MPG1. This Pyricularia oryzae (strain 70-15 / ATCC MYA-4617 / FGSC 8958) (Rice blast fungus) protein is Mitogen-activated protein kinase MPS1.